A 421-amino-acid polypeptide reads, in one-letter code: Imidazolonepropionase (421 aa).

Fe(3+) contacts are provided by His81 and His83. Zn(2+)-binding residues include His81 and His83. Residues Arg90, Tyr153, and His186 each contribute to the 4-imidazolone-5-propanoate site. Tyr153 contacts N-formimidoyl-L-glutamate. His251 contacts Fe(3+). Residue His251 participates in Zn(2+) binding. Glu254 serves as a coordination point for 4-imidazolone-5-propanoate. Asp326 contacts Fe(3+). Asp326 contributes to the Zn(2+) binding site. Positions 328 and 330 each coordinate N-formimidoyl-L-glutamate. Ser331 serves as a coordination point for 4-imidazolone-5-propanoate.

The protein belongs to the metallo-dependent hydrolases superfamily. HutI family. It depends on Zn(2+) as a cofactor. Fe(3+) serves as cofactor.

Its subcellular location is the cytoplasm. It catalyses the reaction 4-imidazolone-5-propanoate + H2O = N-formimidoyl-L-glutamate. Its pathway is amino-acid degradation; L-histidine degradation into L-glutamate; N-formimidoyl-L-glutamate from L-histidine: step 3/3. Catalyzes the hydrolytic cleavage of the carbon-nitrogen bond in imidazolone-5-propanoate to yield N-formimidoyl-L-glutamate. It is the third step in the universal histidine degradation pathway. This Streptococcus pyogenes serotype M28 (strain MGAS6180) protein is Imidazolonepropionase.